The following is a 123-amino-acid chain: Probable histone H2B 3 (123 aa).

Residues 1–31 form a disordered region; it reads MAPPKPSAKGAKKAAKTVSKPKDGKKRKHAR. O-linked (GlcNAc) serine glycosylation is present at Ser110. Lys118 is covalently cross-linked (Glycyl lysine isopeptide (Lys-Gly) (interchain with G-Cter in ubiquitin)).

Belongs to the histone H2B family. The nucleosome is a histone octamer containing two molecules each of H2A, H2B, H3 and H4 assembled in one H3-H4 heterotetramer and two H2A-H2B heterodimers. The octamer wraps approximately 147 bp of DNA. In terms of processing, monoubiquitination of Lys-118 gives a specific tag for epigenetic transcriptional activation and is also prerequisite for histone H3 'Lys-4' and 'Lys-79' methylation. Post-translationally, glcNAcylation at Ser-110 promotes monoubiquitination of Lys-118. It fluctuates in response to extracellular glucose, and associates with transcribed genes.

It localises to the nucleus. The protein localises to the chromosome. Functionally, core component of nucleosome. Nucleosomes wrap and compact DNA into chromatin, limiting DNA accessibility to the cellular machineries which require DNA as a template. Histones thereby play a central role in transcription regulation, DNA repair, DNA replication and chromosomal stability. DNA accessibility is regulated via a complex set of post-translational modifications of histones, also called histone code, and nucleosome remodeling. In Caenorhabditis elegans, this protein is Probable histone H2B 3 (his-41).